Reading from the N-terminus, the 232-residue chain is Heptaprenylglyceryl phosphate synthase (232 aa).

Lys12 contacts sn-glycerol 1-phosphate. The Mg(2+) site is built by Asp14 and Thr40. Residues 159 to 164 (YLEYSG), Gly189, and 209 to 210 (GN) each bind sn-glycerol 1-phosphate.

Belongs to the GGGP/HepGP synthase family. Group I subfamily. In terms of assembly, homodimer. Mg(2+) is required as a cofactor.

The catalysed reaction is sn-glycerol 1-phosphate + all-trans-heptaprenyl diphosphate = 3-heptaprenyl-sn-glycero-1-phosphate + diphosphate. Its pathway is membrane lipid metabolism; glycerophospholipid metabolism. Its function is as follows. Prenyltransferase that catalyzes in vivo the transfer of the heptaprenyl moiety of heptaprenyl pyrophosphate (HepPP; 35 carbon atoms) to the C3 hydroxyl of sn-glycerol-1-phosphate (G1P), producing heptaprenylglyceryl phosphate (HepGP). This reaction is an ether-bond-formation step in the biosynthesis of archaea-type G1P-based membrane lipids found in Bacillales. The polypeptide is Heptaprenylglyceryl phosphate synthase (Shouchella clausii (strain KSM-K16) (Alkalihalobacillus clausii)).